The sequence spans 301 residues: Glycerol-3-phosphate dehydrogenase [NAD(P)+] (301 aa).

Residues Trp-13, Arg-33, and Lys-78 each contribute to the NADPH site. Sn-glycerol 3-phosphate contacts are provided by Lys-78 and Gly-106. Ala-110 provides a ligand contact to NADPH. Positions 161, 214, 224, 225, and 226 each coordinate sn-glycerol 3-phosphate. Catalysis depends on Lys-161, which acts as the Proton acceptor. Residue Arg-225 participates in NADPH binding. Glu-251 is a binding site for NADPH.

Belongs to the NAD-dependent glycerol-3-phosphate dehydrogenase family.

Its subcellular location is the cytoplasm. It catalyses the reaction sn-glycerol 3-phosphate + NAD(+) = dihydroxyacetone phosphate + NADH + H(+). It carries out the reaction sn-glycerol 3-phosphate + NADP(+) = dihydroxyacetone phosphate + NADPH + H(+). The protein operates within membrane lipid metabolism; glycerophospholipid metabolism. Functionally, catalyzes the reduction of the glycolytic intermediate dihydroxyacetone phosphate (DHAP) to sn-glycerol 3-phosphate (G3P), the key precursor for phospholipid synthesis. This is Glycerol-3-phosphate dehydrogenase [NAD(P)+] from Synechococcus sp. (strain RCC307).